A 695-amino-acid polypeptide reads, in one-letter code: Ubiquitin carboxyl-terminal hydrolase 20 (695 aa).

2 disordered regions span residues 1-20 (MLMA…SSIL) and 42-162 (SLAL…SLFY). 2 stretches are compositionally biased toward low complexity: residues 9 to 20 (PSSILPRSSSIL) and 61 to 86 (NHDS…SQSV). Positions 112-124 (DDIDDDIWGDDDL) are enriched in acidic residues. The 301-residue stretch at 176 to 476 (AGLWNLGNSC…DSYILFYARE (301 aa)) folds into the USP domain. The active-site Nucleophile is the Cys185. Catalysis depends on His435, which acts as the Proton acceptor. Residues 556-571 (SAESSSGEESPMGELL) are compositionally biased toward low complexity. Disordered regions lie at residues 556–585 (SAES…PCTE) and 674–695 (AREL…LKTT).

Belongs to the peptidase C19 family.

It carries out the reaction Thiol-dependent hydrolysis of ester, thioester, amide, peptide and isopeptide bonds formed by the C-terminal Gly of ubiquitin (a 76-residue protein attached to proteins as an intracellular targeting signal).. Its function is as follows. Recognizes and hydrolyzes the peptide bond at the C-terminal Gly of ubiquitin. Involved in the processing of poly-ubiquitin precursors as well as that of ubiquitinated proteins. The polypeptide is Ubiquitin carboxyl-terminal hydrolase 20 (UBP20) (Arabidopsis thaliana (Mouse-ear cress)).